The sequence spans 367 residues: Lysophosphatidic acid receptor 5 (367 aa).

Residues methionine 1–leucine 25 are Extracellular-facing. Asparagine 4 is a glycosylation site (N-linked (GlcNAc...) asparagine). The chain crosses the membrane as a helical span at residues valine 26–phenylalanine 46. The Cytoplasmic segment spans residues leucine 47–serine 54. Residues valine 55–proline 75 traverse the membrane as a helical segment. At leucine 76 to leucine 95 the chain is on the extracellular side. Cysteine 93 and cysteine 174 form a disulfide bridge. The helical transmembrane segment at alanine 96–valine 116 threads the bilayer. Over aspartate 117–arginine 135 the chain is Cytoplasmic. A helical transmembrane segment spans residues valine 136–isoleucine 156. Topologically, residues leucine 157–serine 186 are extracellular. N-linked (GlcNAc...) asparagine glycosylation occurs at asparagine 170. A helical membrane pass occupies residues leucine 187 to valine 207. Residues tyrosine 208 to serine 238 are Cytoplasmic-facing. The helical transmembrane segment at leucine 239 to leucine 259 threads the bilayer. Over arginine 260–arginine 275 the chain is Extracellular. A helical membrane pass occupies residues glycine 276 to tyrosine 296. Residues tyrosine 297–phenylalanine 367 are Cytoplasmic-facing. Positions leucine 332–glutamine 350 are enriched in low complexity. Residues leucine 332–phenylalanine 367 form a disordered region. Positions proline 351–proline 360 are enriched in polar residues.

Belongs to the G-protein coupled receptor 1 family.

Its subcellular location is the cell membrane. Its function is as follows. Receptor for lysophosphatidic acid (LPA), a mediator of diverse cellular activities. The protein is Lysophosphatidic acid receptor 5 (LPAR5) of Bos taurus (Bovine).